An 801-amino-acid chain; its full sequence is Phenylalanine--tRNA ligase beta subunit (801 aa).

Positions 39-147 (GGGLDQVVVA…SDLPLGVPLF (109 aa)) constitute a tRNA-binding domain. A B5 domain is found at 401–477 (VSHRTIRFRV…RLNGYDRIET (77 aa)). The Mg(2+) site is built by Asp-455, Asp-461, Glu-464, and Glu-465. In terms of domain architecture, FDX-ACB spans 708-801 (SRFPDTFRDI…LVAKLGATIR (94 aa)).

It belongs to the phenylalanyl-tRNA synthetase beta subunit family. Type 1 subfamily. Tetramer of two alpha and two beta subunits. Requires Mg(2+) as cofactor.

It is found in the cytoplasm. The enzyme catalyses tRNA(Phe) + L-phenylalanine + ATP = L-phenylalanyl-tRNA(Phe) + AMP + diphosphate + H(+). The protein is Phenylalanine--tRNA ligase beta subunit of Geobacter sulfurreducens (strain ATCC 51573 / DSM 12127 / PCA).